The sequence spans 393 residues: Zinc finger CCCH domain-containing protein 2 (393 aa).

A disordered region spans residues 1 to 71 (MDVVCTEHQM…NRENKEYCYD (71 aa)). The segment covering 20–37 (RKLLLSSKSFPSDSSSPR) has biased composition (low complexity). The span at 60–69 (DNNRENKEYC) shows a compositional bias: basic and acidic residues. 2 C3H1-type zinc fingers span residues 122–150 (QYSGEVCPEFRRGGDCSRGDDCEFAHGVF) and 159–181 (YRTEACKDGKHCKRKVCFFAHSP).

In terms of assembly, interacts with MARD1/FLZ9 and RD21A. As to expression, specifically expressed in seeds.

The protein localises to the nucleus. Functionally, probable transcription repressor that functions as a negative regulator of phytochrome-mediated promotion of seed germination. Inhibits seed germination by regulating the expression of gibberellic acid (GA) and abscisic acid (ABA) metabolic genes. Does not regulate the expression of the DELLA genes RGA and RGA1. Activated by PIL5, a phytochrome-interacting basic helix-loop-helix transcription factor. Represses directly JMJ20 and JMJ22 expression in the absence of red light (R) and in far-red (FR) conditions. The chain is Zinc finger CCCH domain-containing protein 2 from Arabidopsis thaliana (Mouse-ear cress).